We begin with the raw amino-acid sequence, 338 residues long: Uroporphyrinogen decarboxylase (338 aa).

Substrate-binding positions include 27–31, aspartate 77, tyrosine 151, serine 203, and histidine 317; that span reads RQAGR.

This sequence belongs to the uroporphyrinogen decarboxylase family. In terms of assembly, homodimer.

The protein localises to the cytoplasm. It catalyses the reaction uroporphyrinogen III + 4 H(+) = coproporphyrinogen III + 4 CO2. It functions in the pathway porphyrin-containing compound metabolism; protoporphyrin-IX biosynthesis; coproporphyrinogen-III from 5-aminolevulinate: step 4/4. Catalyzes the decarboxylation of four acetate groups of uroporphyrinogen-III to yield coproporphyrinogen-III. The polypeptide is Uroporphyrinogen decarboxylase (Wolbachia pipientis wMel).